A 361-amino-acid polypeptide reads, in one-letter code: Cilia- and flagella-associated protein 263 (361 aa).

The protein belongs to the CFAP263 family. In terms of assembly, forms a complex with CFAP184; the interaction is required for functional activity in cilia.

The protein resides in the cell projection. The protein localises to the cilium. In terms of biological role, in complex with CFAP263, acts as a regulator of ciliary beating that connects radial spoke 3 (RS3) to the inner dynein arm (IDA) and the nexin-dynein regulatory complex (N-DRC). The complex is positioned parallel to N-DRC and forms a connection between the arch at the base of RS3, the IDA tail and N-DRC. The sequence is that of Cilia- and flagella-associated protein 263 (CFAP263) from Tetrahymena thermophila (strain SB210).